The following is an 88-amino-acid chain: Probable Fe(2+)-trafficking protein (88 aa).

It belongs to the Fe(2+)-trafficking protein family.

Could be a mediator in iron transactions between iron acquisition and iron-requiring processes, such as synthesis and/or repair of Fe-S clusters in biosynthetic enzymes. In Neisseria gonorrhoeae (strain ATCC 700825 / FA 1090), this protein is Probable Fe(2+)-trafficking protein.